Here is a 226-residue protein sequence, read N- to C-terminus: MLTQQELKQQAADAALELVEQVAGPDVIIGVGTGSTADLFIDGLARFKGRLRGTVASSERSAARLAGHGLAVLDLNDVQSMPIYVDGADEIDPNLHMIKGGGGALTREKIVASVARRYICIADESKLVERLGRFPLPVEVIPMARNAVARGLSRLGGQPALREGFVTDNGNIILDVAGLSIADAPGLEKTINDIPGVVTCGLFALAGADVALLATQDGIRRLERRG.

Substrate-binding positions include 33–36 (TGST), 86–89 (DGAD), and 99–102 (KGGG). The active-site Proton acceptor is E108. Substrate is bound at residue K126.

The protein belongs to the ribose 5-phosphate isomerase family. Homodimer.

The enzyme catalyses aldehydo-D-ribose 5-phosphate = D-ribulose 5-phosphate. Its pathway is carbohydrate degradation; pentose phosphate pathway; D-ribose 5-phosphate from D-ribulose 5-phosphate (non-oxidative stage): step 1/1. Its function is as follows. Catalyzes the reversible conversion of ribose-5-phosphate to ribulose 5-phosphate. The chain is Ribose-5-phosphate isomerase A from Bordetella parapertussis (strain 12822 / ATCC BAA-587 / NCTC 13253).